Reading from the N-terminus, the 242-residue chain is 1-(5-phosphoribosyl)-5-[(5-phosphoribosylamino)methylideneamino] imidazole-4-carboxamide isomerase (242 aa).

Catalysis depends on aspartate 10, which acts as the Proton acceptor.

This sequence belongs to the HisA/HisF family.

The protein resides in the cytoplasm. It carries out the reaction 1-(5-phospho-beta-D-ribosyl)-5-[(5-phospho-beta-D-ribosylamino)methylideneamino]imidazole-4-carboxamide = 5-[(5-phospho-1-deoxy-D-ribulos-1-ylimino)methylamino]-1-(5-phospho-beta-D-ribosyl)imidazole-4-carboxamide. Its pathway is amino-acid biosynthesis; L-histidine biosynthesis; L-histidine from 5-phospho-alpha-D-ribose 1-diphosphate: step 4/9. The protein is 1-(5-phosphoribosyl)-5-[(5-phosphoribosylamino)methylideneamino] imidazole-4-carboxamide isomerase of Corynebacterium diphtheriae (strain ATCC 700971 / NCTC 13129 / Biotype gravis).